A 214-amino-acid chain; its full sequence is Transcription factor 23 (214 aa).

Disordered stretches follow at residues 1 to 86 (MSQR…ARER) and 174 to 214 (DSTT…LGDK). The segment covering 40 to 49 (TRQDPWEERS) has biased composition (basic and acidic residues). Positions 76 to 128 (EASPENAARERSRVRTLRQAFLALQAALPAVPPDTKLSKLDVLVLAASYIAHL) constitute a bHLH domain. Polar residues predominate over residues 174 to 183 (DSTTASTPSQ).

Forms inactive heterodimeric complexes with TCF3. Expressed in liver, kidney and spleen.

It is found in the nucleus. Inhibits E-box-mediated binding and transactivation of bHLH factors. Inhibitory effect is similar to that of ID proteins. Inhibits the formation of TCF3 and MYOD1 homodimers and heterodimers. Lacks DNA binding activity. Seems to play a role in the inhibition of myogenesis. The chain is Transcription factor 23 (TCF23) from Homo sapiens (Human).